The following is a 180-amino-acid chain: Adenine phosphoribosyltransferase (180 aa).

Serine 2 bears the N-acetylserine mark. A phosphoserine mark is found at serine 15 and serine 30. Tyrosine 60 carries the phosphotyrosine modification. Phosphoserine is present on serine 66. Lysine 114 carries the post-translational modification N6-acetyllysine. Threonine 135 carries the phosphothreonine modification.

The protein belongs to the purine/pyrimidine phosphoribosyltransferase family. Homodimer.

It is found in the cytoplasm. It carries out the reaction AMP + diphosphate = 5-phospho-alpha-D-ribose 1-diphosphate + adenine. It functions in the pathway purine metabolism; AMP biosynthesis via salvage pathway; AMP from adenine: step 1/1. Its function is as follows. Catalyzes a salvage reaction resulting in the formation of AMP, that is energically less costly than de novo synthesis. In Stochomys longicaudatus (Target rat), this protein is Adenine phosphoribosyltransferase.